The sequence spans 288 residues: Alpha/beta hydrolase domain-containing protein 17B (288 aa).

Catalysis depends on charge relay system residues Ser-170, Asp-235, and His-264.

Belongs to the AB hydrolase superfamily. ABHD17 family. Palmitoylated on cysteine residues located in a cysteine cluster at the N-terminus which promotes membrane localization.

Its subcellular location is the cell membrane. It is found in the recycling endosome membrane. The protein resides in the cell projection. The protein localises to the dendritic spine. It localises to the postsynaptic density membrane. It carries out the reaction S-hexadecanoyl-L-cysteinyl-[protein] + H2O = L-cysteinyl-[protein] + hexadecanoate + H(+). Hydrolyzes fatty acids from S-acylated cysteine residues in proteins. This Xenopus tropicalis (Western clawed frog) protein is Alpha/beta hydrolase domain-containing protein 17B.